The sequence spans 420 residues: Serine hydroxymethyltransferase (420 aa).

(6S)-5,6,7,8-tetrahydrofolate is bound by residues L121 and 125–127; that span reads GHL. K230 carries the N6-(pyridoxal phosphate)lysine modification. (6S)-5,6,7,8-tetrahydrofolate contacts are provided by residues E246 and 354 to 356; that span reads SPF.

The protein belongs to the SHMT family. In terms of assembly, homodimer. Requires pyridoxal 5'-phosphate as cofactor.

The protein resides in the cytoplasm. The enzyme catalyses (6R)-5,10-methylene-5,6,7,8-tetrahydrofolate + glycine + H2O = (6S)-5,6,7,8-tetrahydrofolate + L-serine. The protein operates within one-carbon metabolism; tetrahydrofolate interconversion. It functions in the pathway amino-acid biosynthesis; glycine biosynthesis; glycine from L-serine: step 1/1. Functionally, catalyzes the reversible interconversion of serine and glycine with tetrahydrofolate (THF) serving as the one-carbon carrier. This reaction serves as the major source of one-carbon groups required for the biosynthesis of purines, thymidylate, methionine, and other important biomolecules. Also exhibits THF-independent aldolase activity toward beta-hydroxyamino acids, producing glycine and aldehydes, via a retro-aldol mechanism. This Rickettsia typhi (strain ATCC VR-144 / Wilmington) protein is Serine hydroxymethyltransferase.